Reading from the N-terminus, the 363-residue chain is Ly6/PLAUR domain-containing protein 3 (363 aa).

Residues 1–32 (MDAARRGDTQPVMWTTGWLLLLPLLLCEGAQA) form the signal peptide. The 94-residue stretch at 35-128 (CYSCVQKADD…LNLTLRGLNP (94 aa)) folds into the UPAR/Ly6 1 domain. Asparagine 120, asparagine 131, asparagine 178, and asparagine 185 each carry an N-linked (GlcNAc...) asparagine glycan. Positions 142–224 (CYSCVGLSRE…GSCCQGPRCN (83 aa)) constitute a UPAR/Ly6 2 domain. Over residues 238-248 (PPLVLLPPPTT) the composition is skewed to pro residues. Disordered regions lie at residues 238-287 (PPLV…TSPH) and 301-336 (LSGG…GGAQ). Low complexity predominate over residues 249–278 (AAPSTRAQNSSSTTSTAAPTTTTSIIKPTT). The span at 304–318 (GAAGHGGTAGHGGAA) shows a compositional bias: gly residues. Residues 320–330 (HQDRSNMEKYP) show a composition bias toward basic and acidic residues. A lipid anchor (GPI-anchor amidated serine) is attached at serine 343. Positions 344–363 (GTLGSWLSAVLLTVVAGAML) are cleaved as a propeptide — removed in mature form.

In terms of assembly, binds laminin-1 and laminin-5. Interacts with LGALS3. Interacts with AGR2 and AGR3.

The protein localises to the cell membrane. Its function is as follows. Supports cell migration. May be involved in tumor progression. This chain is Ly6/PLAUR domain-containing protein 3 (Lypd3), found in Mus musculus (Mouse).